A 304-amino-acid chain; its full sequence is UDP-N-acetylenolpyruvoylglucosamine reductase (304 aa).

The FAD-binding PCMH-type domain occupies 33–198 (RVGGPADILV…IEATVELESG (166 aa)). Arg-177 is a catalytic residue. Catalysis depends on Ser-227, which acts as the Proton donor. Glu-297 is a catalytic residue.

Belongs to the MurB family. FAD is required as a cofactor.

The protein resides in the cytoplasm. The catalysed reaction is UDP-N-acetyl-alpha-D-muramate + NADP(+) = UDP-N-acetyl-3-O-(1-carboxyvinyl)-alpha-D-glucosamine + NADPH + H(+). It participates in cell wall biogenesis; peptidoglycan biosynthesis. Its function is as follows. Cell wall formation. The polypeptide is UDP-N-acetylenolpyruvoylglucosamine reductase (Clostridium perfringens (strain ATCC 13124 / DSM 756 / JCM 1290 / NCIMB 6125 / NCTC 8237 / Type A)).